The sequence spans 296 residues: 4-hydroxy-tetrahydrodipicolinate synthase (296 aa).

Position 50 (threonine 50) interacts with pyruvate. Tyrosine 138 serves as the catalytic Proton donor/acceptor. Lysine 166 functions as the Schiff-base intermediate with substrate in the catalytic mechanism. Isoleucine 208 contacts pyruvate.

The protein belongs to the DapA family. As to quaternary structure, homotetramer; dimer of dimers.

It localises to the cytoplasm. The enzyme catalyses L-aspartate 4-semialdehyde + pyruvate = (2S,4S)-4-hydroxy-2,3,4,5-tetrahydrodipicolinate + H2O + H(+). Its pathway is amino-acid biosynthesis; L-lysine biosynthesis via DAP pathway; (S)-tetrahydrodipicolinate from L-aspartate: step 3/4. Functionally, catalyzes the condensation of (S)-aspartate-beta-semialdehyde [(S)-ASA] and pyruvate to 4-hydroxy-tetrahydrodipicolinate (HTPA). The protein is 4-hydroxy-tetrahydrodipicolinate synthase of Ruthia magnifica subsp. Calyptogena magnifica.